A 127-amino-acid chain; its full sequence is MGFWKFSPFLVLGILALYQVGFLQAAPFRSALENPPDSGVRNEEELRLLLAAVMKDYMQMKTHELEQEQETEGSRVAVQKRSCNSATCVAHWLGGLLSRAGSVANTNLLPTSMGFKVYNRRRRELKA.

An N-terminal signal peptide occupies residues 1–25 (MGFWKFSPFLVLGILALYQVGFLQA). The propeptide occupies 26–79 (APFRSALENPPDSGVRNEEELRLLLAAVMKDYMQMKTHELEQEQETEGSRVAVQ). Residues C83 and C88 are joined by a disulfide bond.

The protein belongs to the calcitonin family.

The protein localises to the secreted. Functionally, stimulates cAMP production in porcine kidney cell line LLC-PK1 via the calcitonin receptor (CT) but not via the CT-like (CL) receptor. This is Calcitonin receptor-stimulating peptide 1 (CRSP1) from Canis lupus familiaris (Dog).